Here is a 530-residue protein sequence, read N- to C-terminus: MKSIIFNEIKKILECDFALENPKDKNLAHFATPLAFSLAKELKKSPMLIASDLASKFQNHDCFESVEAVNGYLNFRISKTFLNELANQALTNPNDFTKGEKKQESFLLEYVSANPTGPLHIGHARGAVFGDTLTRLARHLGYKFNTEYYVNDAGNQIYLLGLSILLSVKESILHENVEYPEQYYKGEYIADLAKEAFEKFGKEFFSQENIPSLADWAKDKMLVLIKQNLEQAKIKIDSYVSERSYYDALNATLESLKEHKGIYEQEGKIWLASSQKGDEKDRVIIREDGRGTYLAADIVYHKDKMSRGYGKCINIWGADHHGYIPRMKAAMEFLGFDSNNLEIILAQMVSLLKDGEPYKMSKRAGNFILMSDVVNEIGSDALRYIFLSKKCDTHLEFDISDLQKEDSSNPVYYINYAHARIHQVFAKAGKKIDDVMKADLQSLNQDGVNLLFEALNLKAVLNDAFEARALQKIPDYLKNLAANFHKFYNENKVVGSANENDLLKLFSLVALSIKTAFSLMGIEAKNKMEH.

A 'HIGH' region motif is present at residues 113-123 (ANPTGPLHIGH).

Belongs to the class-I aminoacyl-tRNA synthetase family. As to quaternary structure, monomer.

The protein localises to the cytoplasm. It catalyses the reaction tRNA(Arg) + L-arginine + ATP = L-arginyl-tRNA(Arg) + AMP + diphosphate. The chain is Arginine--tRNA ligase from Campylobacter jejuni (strain RM1221).